The chain runs to 506 residues: Anaerobic nitric oxide reductase transcription regulator NorR (506 aa).

4-aspartylphosphate is present on Asp-57. Positions 187–416 (MIGLSPAMTQ…LEHAIHRAVV (230 aa)) constitute a Sigma-54 factor interaction domain. ATP contacts are provided by residues 215–222 (GETGTGKE) and 278–287 (ADNGTLFLDE). Positions 481–500 (WAASARALETDVANLHRLAK) form a DNA-binding region, H-T-H motif.

The protein operates within nitrogen metabolism; nitric oxide reduction. Functionally, required for the expression of anaerobic nitric oxide (NO) reductase, acts as a transcriptional activator for at least the norVW operon. Activation also requires sigma-54. This Salmonella heidelberg (strain SL476) protein is Anaerobic nitric oxide reductase transcription regulator NorR.